A 271-amino-acid polypeptide reads, in one-letter code: 4-hydroxy-tetrahydrodipicolinate reductase (271 aa).

Glycine 8–methionine 13 is an NAD(+) binding site. Arginine 35 is a binding site for NADP(+). NAD(+) is bound by residues glycine 100–threonine 102 and alanine 124–methionine 127. Histidine 157 acts as the Proton donor/acceptor in catalysis. A (S)-2,3,4,5-tetrahydrodipicolinate-binding site is contributed by histidine 158. Residue lysine 161 is the Proton donor of the active site. Glycine 167–threonine 168 provides a ligand contact to (S)-2,3,4,5-tetrahydrodipicolinate.

This sequence belongs to the DapB family.

It localises to the cytoplasm. It carries out the reaction (S)-2,3,4,5-tetrahydrodipicolinate + NAD(+) + H2O = (2S,4S)-4-hydroxy-2,3,4,5-tetrahydrodipicolinate + NADH + H(+). The catalysed reaction is (S)-2,3,4,5-tetrahydrodipicolinate + NADP(+) + H2O = (2S,4S)-4-hydroxy-2,3,4,5-tetrahydrodipicolinate + NADPH + H(+). It participates in amino-acid biosynthesis; L-lysine biosynthesis via DAP pathway; (S)-tetrahydrodipicolinate from L-aspartate: step 4/4. Its function is as follows. Catalyzes the conversion of 4-hydroxy-tetrahydrodipicolinate (HTPA) to tetrahydrodipicolinate. The sequence is that of 4-hydroxy-tetrahydrodipicolinate reductase from Myxococcus xanthus (strain DK1622).